Consider the following 89-residue polypeptide: Small ribosomal subunit protein uS14 (89 aa).

Belongs to the universal ribosomal protein uS14 family. As to quaternary structure, part of the 30S ribosomal subunit. Contacts proteins S3 and S10.

Its function is as follows. Binds 16S rRNA, required for the assembly of 30S particles and may also be responsible for determining the conformation of the 16S rRNA at the A site. The polypeptide is Small ribosomal subunit protein uS14 (Amoebophilus asiaticus (strain 5a2)).